An 865-amino-acid chain; its full sequence is FO synthase (865 aa).

Residues M1–S21 are disordered. Radical SAM core domains are found at residues I76–D320 and V544–Q785. A cofG-like region spans residues T77 to L409. [4Fe-4S] cluster-binding residues include C90, C94, C97, C558, C562, and C565. The cofH-like stretch occupies residues D521–V854.

This sequence in the N-terminal section; belongs to the radical SAM superfamily. CofG family. In the C-terminal section; belongs to the radical SAM superfamily. CofH family. [4Fe-4S] cluster is required as a cofactor.

The enzyme catalyses 5-amino-6-(D-ribitylamino)uracil + L-tyrosine + S-adenosyl-L-methionine = 5-amino-5-(4-hydroxybenzyl)-6-(D-ribitylimino)-5,6-dihydrouracil + 2-iminoacetate + 5'-deoxyadenosine + L-methionine + H(+). It catalyses the reaction 5-amino-5-(4-hydroxybenzyl)-6-(D-ribitylimino)-5,6-dihydrouracil + S-adenosyl-L-methionine = 7,8-didemethyl-8-hydroxy-5-deazariboflavin + 5'-deoxyadenosine + L-methionine + NH4(+) + H(+). The protein operates within cofactor biosynthesis; coenzyme F0 biosynthesis. Its function is as follows. Catalyzes the radical-mediated synthesis of 7,8-didemethyl-8-hydroxy-5-deazariboflavin (FO) from 5-amino-6-(D-ribitylamino)uracil and L-tyrosine. The polypeptide is FO synthase (fbiC) (Nocardia farcinica (strain IFM 10152)).